The following is a 233-amino-acid chain: Small ribosomal subunit protein uS2 (233 aa).

The protein belongs to the universal ribosomal protein uS2 family.

The sequence is that of Small ribosomal subunit protein uS2 from Clostridium botulinum (strain Hall / ATCC 3502 / NCTC 13319 / Type A).